The chain runs to 344 residues: Dimethyladenosine transferase 1, mitochondrial (344 aa).

Residues 1–27 (MATPGALAKFRLPPLPTIGEIVKLFNL) constitute a mitochondrion transit peptide. S-adenosyl-L-methionine-binding residues include N36, L38, G63, E85, K86, D111, I112, and N141.

Belongs to the class I-like SAM-binding methyltransferase superfamily. rRNA adenine N(6)-methyltransferase family. KsgA subfamily.

Its subcellular location is the mitochondrion. The enzyme catalyses adenosine(N)/adenosine(N+1) in rRNA + 4 S-adenosyl-L-methionine = N(6)-dimethyladenosine(N)/N(6)-dimethyladenosine(N+1) in rRNA + 4 S-adenosyl-L-homocysteine + 4 H(+). Mitochondrial methyltransferase which uses S-adenosyl methionine to dimethylate two highly conserved adjacent adenosine residues (A1583 and A1584) within the loop of helix 45 at the 3-prime end of 12S rRNA, thereby regulating the assembly or stability of the small subunit of the mitochondrial ribosome. Also required for basal transcription of mitochondrial DNA, probably via its interaction with POLRMT and TFAM. Stimulates transcription independently of the methyltransferase activity. The polypeptide is Dimethyladenosine transferase 1, mitochondrial (tfb1m.L) (Xenopus laevis (African clawed frog)).